A 278-amino-acid polypeptide reads, in one-letter code: Shikimate dehydrogenase (NADP(+)) (278 aa).

Residues 19 to 21 and Thr-66 each bind shikimate; that span reads SRS. The active-site Proton acceptor is Lys-70. Shikimate contacts are provided by Asn-91 and Asp-106. NADP(+) contacts are provided by residues 129–133 and Phe-221; that span reads GAGGA. Tyr-223 contributes to the shikimate binding site. Gly-242 lines the NADP(+) pocket.

It belongs to the shikimate dehydrogenase family. In terms of assembly, homodimer.

The catalysed reaction is shikimate + NADP(+) = 3-dehydroshikimate + NADPH + H(+). It participates in metabolic intermediate biosynthesis; chorismate biosynthesis; chorismate from D-erythrose 4-phosphate and phosphoenolpyruvate: step 4/7. Its function is as follows. Involved in the biosynthesis of the chorismate, which leads to the biosynthesis of aromatic amino acids. Catalyzes the reversible NADPH linked reduction of 3-dehydroshikimate (DHSA) to yield shikimate (SA). This Anaeromyxobacter dehalogenans (strain 2CP-C) protein is Shikimate dehydrogenase (NADP(+)).